The primary structure comprises 373 residues: MAEVGPGRVTVSRLGRGLRLGHRRPQTWEISDSDGEGVPAREVGTQAPSPAGERRAAAKALRADQVLGRLVVCVDPAVLEDAGSDILMEALGTLGCECRIEPQHQARSLQWNVVRPDPAPSNVPLEAKAENEQEQLLLLEPQEFLQGAAQLTQITDPPCSIPWLSPKSLTRSHLAVIGLDAYLWSHQLSSQKTWQLKKSKEAHARGAISWAEVEEILVLLQLHANLDVLLMASWQELSQYVCAFTRALSQLPSKQHRDSQAFSFCTAGHWASGQQVTRDGSGLRGVWWRQIRQFNRVSPAVADAVVTAFPSPRLLQQALLDCSTEQERLSLLADLPVKAHKGKQPRRVGPDLSRRICIFLTTTNPDLLLDLSS.

The segment at 24–52 is disordered; it reads RPQTWEISDSDGEGVPAREVGTQAPSPAG. Positions 47–260 are nuclease-like domain; forms the post-nick DNA binding interface and is involved in DNA recognition and bending; it reads APSPAGERRA…LPSKQHRDSQ (214 aa). Positions 282–373 are helix-hairpin-helix (2HhH); forms the pre-nick DNA binding interface and is involved in DNA recognition and bending; sequence GLRGVWWRQI…NPDLLLDLSS (92 aa).

It belongs to the EME1/MMS4 family. In terms of assembly, part of the heterodimeric MUS81-EME2 complex; the complex forms specifically during the DNA replication phase of the cell cycle.

The protein resides in the nucleus. In terms of biological role, non-catalytic subunit of the structure-specific, heterodimeric DNA endonuclease MUS81-EME2 which is involved in the maintenance of genome stability. In the complex, EME2 is required for DNA cleavage, participating in DNA recognition and bending. MUS81-EME2 cleaves 3'-flaps and nicked Holliday junctions, and exhibit limited endonuclease activity with 5' flaps and nicked double-stranded DNAs. MUS81-EME2 which is active during the replication of DNA is more specifically involved in replication fork processing. Replication forks frequently encounter obstacles to their passage, including DNA base lesions, DNA interstrand cross-links, difficult-to-replicate sequences, transcription bubbles, or tightly bound proteins. One mechanism for the restart of a stalled replication fork involves nucleolytic cleavage mediated by the MUS81-EME2 endonuclease. By acting upon the stalled fork, MUS81-EME2 generates a DNA double-strand break (DSB) that can be repaired by homologous recombination, leading to the restoration of an active fork. MUS81-EME2 could also function in telomere maintenance. In Mus musculus (Mouse), this protein is Structure-specific endonuclease subunit EME2.